A 689-amino-acid polypeptide reads, in one-letter code: Protein-glutamine gamma-glutamyltransferase 2 (689 aa).

Residues cysteine 278, histidine 336, and aspartate 359 contribute to the active site. Positions 399, 401, 437, 447, and 452 each coordinate Ca(2+). Positions 427–453 (STKSVGRDSREDITHTYKYPEGSEKER) are disordered. Positions 431–441 (VGRDSREDITH) are enriched in basic and acidic residues. 476 to 483 (RIKLSEGA) lines the GTP pocket. Glutamate 539 contacts Ca(2+). 580–583 (RDVY) lines the GTP pocket.

This sequence belongs to the transglutaminase superfamily. Transglutaminase family. As to quaternary structure, monomer. Requires Ca(2+) as cofactor. Predominates in mature erythrocytes. Also found in kidney and cardiac muscle.

It is found in the cytoplasm. Its subcellular location is the cytosol. The protein resides in the nucleus. The protein localises to the chromosome. It localises to the secreted. It is found in the extracellular space. Its subcellular location is the extracellular matrix. The protein resides in the cell membrane. The protein localises to the mitochondrion. The catalysed reaction is L-glutaminyl-[protein] + L-lysyl-[protein] = [protein]-L-lysyl-N(6)-5-L-glutamyl-[protein] + NH4(+). The enzyme catalyses L-glutaminyl-[protein] + serotonin = 5-serotonyl-L-glutamyl-[protein] + NH4(+). It catalyses the reaction L-glutaminyl-[protein] + dopamine = 5-dopaminyl-L-glutamyl-[protein] + NH4(+). It carries out the reaction L-glutaminyl-[protein] + histamine = 5-histaminyl-L-glutamyl-[protein] + NH4(+). The catalysed reaction is L-glutaminyl-[protein] + (R)-noradrenaline = 5-(R)-noradrenalinyl-L-glutamyl-[protein] + NH4(+). The enzyme catalyses L-glutaminyl-[protein] + H2O = L-glutamyl-[protein] + NH4(+). With respect to regulation, acyltransferase activity is regulated by the binding of GTP and Ca(2+): inactivated by GTP, which stabilizes its closed structure, thereby obstructing the accessibility of substrates to the active sites. In contrast, Ca(2+) acts as a cofactor by inducing conformational change to the active open form. In absence of Ca(2+), Mg(2+) may bind Ca(2+)-binding sites, promoting GTP-binding and subsequent inhibition of the acyltransferase activity. In terms of biological role, calcium-dependent acyltransferase that catalyzes the formation of covalent bonds between peptide-bound glutamine and various primary amines, such as gamma-amino group of peptide-bound lysine, or mono- and polyamines, thereby producing cross-linked or aminated proteins, respectively. Involved in many biological processes, such as bone development, angiogenesis, wound healing, cellular differentiation, chromatin modification and apoptosis. Acts as a protein-glutamine gamma-glutamyltransferase by mediating the cross-linking of proteins: under physiological conditions, the protein cross-linking activity is inhibited by GTP; inhibition is relieved by Ca(2+) in response to various stresses. When secreted, catalyzes cross-linking of proteins of the extracellular matrix, resulting in the formation of scaffolds. Plays a key role during apoptosis, both by (1) promoting the cross-linking of cytoskeletal proteins resulting in condensation of the cytoplasm, and by (2) mediating cross-linking proteins of the extracellular matrix, resulting in the irreversible formation of scaffolds that stabilize the integrity of the dying cells before their clearance by phagocytosis, thereby preventing the leakage of harmful intracellular components. In addition to protein cross-linking, can use different monoamine substrates to catalyze a vast array of protein post-translational modifications: mediates aminylation of serotonin, dopamine, noradrenaline or histamine into glutamine residues of target proteins to generate protein serotonylation, dopaminylation, noradrenalinylation or histaminylation, respectively. Mediates protein serotonylation of small GTPases during activation and aggregation of platelets, leading to constitutive activation of these GTPases. Plays a key role in chromatin organization by mediating serotonylation and dopaminylation of histone H3. Catalyzes serotonylation of 'Gln-5' of histone H3 (H3Q5ser) during serotonergic neuron differentiation, thereby facilitating transcription. Acts as a mediator of neurotransmission-independent role of nuclear dopamine in ventral tegmental area (VTA) neurons: catalyzes dopaminylation of 'Gln-5' of histone H3 (H3Q5dop), thereby regulating relapse-related transcriptional plasticity in the reward system. Also acts as a protein deamidase by mediating the side chain deamidation of specific glutamine residues of proteins to glutamate. May also act as an isopeptidase cleaving the previously formed cross-links. Also able to participate in signaling pathways independently of its acyltransferase activity: acts as a signal transducer in alpha-1 adrenergic receptor-mediated stimulation of phospholipase C-delta (PLCD) activity and is required for coupling alpha-1 adrenergic agonists to the stimulation of phosphoinositide lipid metabolism. This Gallus gallus (Chicken) protein is Protein-glutamine gamma-glutamyltransferase 2.